Reading from the N-terminus, the 276-residue chain is Ribosomal RNA small subunit methyltransferase A (276 aa).

Positions 27, 29, 54, 75, 101, and 122 each coordinate S-adenosyl-L-methionine.

Belongs to the class I-like SAM-binding methyltransferase superfamily. rRNA adenine N(6)-methyltransferase family. RsmA subfamily.

It localises to the cytoplasm. It carries out the reaction adenosine(1518)/adenosine(1519) in 16S rRNA + 4 S-adenosyl-L-methionine = N(6)-dimethyladenosine(1518)/N(6)-dimethyladenosine(1519) in 16S rRNA + 4 S-adenosyl-L-homocysteine + 4 H(+). Its function is as follows. Specifically dimethylates two adjacent adenosines (A1518 and A1519) in the loop of a conserved hairpin near the 3'-end of 16S rRNA in the 30S particle. May play a critical role in biogenesis of 30S subunits. This chain is Ribosomal RNA small subunit methyltransferase A, found in Brucella suis (strain ATCC 23445 / NCTC 10510).